A 149-amino-acid polypeptide reads, in one-letter code: Large ribosomal subunit protein bL20m (149 aa).

The N-terminal 9 residues, methionine 1–tryptophan 9, are a transit peptide targeting the mitochondrion.

This sequence belongs to the bacterial ribosomal protein bL20 family. As to quaternary structure, component of the mitochondrial ribosome large subunit (39S) which comprises a 16S rRNA and about 50 distinct proteins. Interacts with OXA1L.

It localises to the mitochondrion. The sequence is that of Large ribosomal subunit protein bL20m (MRPL20) from Bos taurus (Bovine).